Consider the following 44-residue polypeptide: Defensin-like peptide (44 aa).

Disulfide bonds link Cys-7-Cys-32, Cys-18-Cys-40, and Cys-22-Cys-42.

Hemolymph.

The protein localises to the secreted. Its function is as follows. Has antibacterial activity against the Gram-positive bacterium S.lutea (MIC=1.9 uM). Lacks antibacterial activity against the Gram-positive bacteria L.monocytogenes and M.luteus, and the Gram-negative bacteria E.coli D31, E.coli ATCC 25922, and S.typhimurium. Has antifungal activity against A.niger (MIC=2.9 uM), C.albicans (MIC=2.9 uM), C.fructus (MIC=2.9 uM), C.wickerhamii (MIC=2.9 uM), P.pastoris (MIC=2.9 uM), P.stiptis (MIC=2.9 uM), P.tannophilus (MIC=2.9 uM), T.harzianum (MIC=2.9 uM), and Z.marxianus (MIC=2.9 uM), but lacks antifungal activity against C.albidus, F.oxysporum, and S.cerevisiae. The polypeptide is Defensin-like peptide (Galleria mellonella (Greater wax moth)).